The primary structure comprises 576 residues: Arginine--tRNA ligase (576 aa).

The 'HIGH' region signature appears at 122-132 (PNVAKQMHVGH).

It belongs to the class-I aminoacyl-tRNA synthetase family. As to quaternary structure, monomer.

Its subcellular location is the cytoplasm. It catalyses the reaction tRNA(Arg) + L-arginine + ATP = L-arginyl-tRNA(Arg) + AMP + diphosphate. The chain is Arginine--tRNA ligase from Yersinia pseudotuberculosis serotype O:3 (strain YPIII).